The following is a 518-amino-acid chain: D-aminopeptidase (518 aa).

Catalysis depends on Ser-62, which acts as the Nucleophile. Lys-65 (proton donor/acceptor) is an active-site residue. The segment at 373 to 392 (FGTGPEKMDISGENEAQSSM) is disordered. An important for specificity region spans residues 477 to 487 (QRSMDAPSPGE). Substrate is bound at residue Asp-481.

Belongs to the peptidase S12 family. As to quaternary structure, homodimer.

It carries out the reaction Release of an N-terminal D-amino acid from a peptide, Xaa-|-Yaa-, in which Xaa is preferably D-Ala, D-Ser or D-Thr. D-amino acid amides and methyl esters also are hydrolyzed, as is glycine amide.. With respect to regulation, inhibited by beta-lactam compounds such as 6-aminopenicillic acid, 7-aminocephalosporanic acid, benzylpenicillin and ampicillin. Inhibited by p-chloromercuribenzoate. In terms of biological role, hydrolyzes N-terminal residues in D-amino acid-containing peptides. The sequence is that of D-aminopeptidase from Brucella melitensis biotype 1 (strain ATCC 23456 / CCUG 17765 / NCTC 10094 / 16M).